Consider the following 107-residue polypeptide: MQRLPAATRATLILSLAFASLHSACSAEASSSNSSSLTAHHPDPGTLEQCLNVDFCPQAARCCRTGVDEYGWIAAAVGWSLWFLTLILLCVDKLMKLTPDEPKDLQA.

The N-terminal stretch at 1-27 (MQRLPAATRATLILSLAFASLHSACSA) is a signal peptide. Topologically, residues 28–70 (EASSSNSSSLTAHHPDPGTLEQCLNVDFCPQAARCCRTGVDEY) are extracellular. Residues 71–91 (GWIAAAVGWSLWFLTLILLCV) form a helical membrane-spanning segment. Residues 92–107 (DKLMKLTPDEPKDLQA) are Cytoplasmic-facing.

Its subcellular location is the membrane. This Homo sapiens (Human) protein is Transmembrane protein 213 (TMEM213).